Consider the following 398-residue polypeptide: MEEDDLNPAGKPLYRLYFKGLVTEEKEMLLAGFGVAICGDKDDLLFDLKVSIHDPTITLLEVELIALKSGLNQAVSLGINHISICCDHEYIFELVMGISTPKQESIALLLRDVQGIRKYLTSSIPVMLTQNQSNLAYDFAIEAISSEIIIDIPAQKETCNICLNDDINADQMFSVDKSGHMCCSECVKRHIEVRLLEGSLITCPHYRCNSLLTSVRCGNLLTPKLNKMWEQKTKDELIPVMDRVYCPNPRCSTLMSETELSGLNIGVRRCCVKCGEPFCVKCKVSWHNNLSCDEYKTLHPNPTENDGRLRDLANEKSWRQCSKCKHMIELSSGCISVVCRCGHTFCYQCGADAGDCFHGLGRDDLDLTQCCGSCCCFVFFLVIIAIVVTIILLVRRFS.

A TRIAD supradomain region spans residues 155–374 (QKETCNICLN…LDLTQCCGSC (220 aa)). 14 residues coordinate Zn(2+): Cys-159, Cys-162, Cys-183, Cys-186, Cys-246, Cys-251, Cys-271, Cys-274, Cys-279, Cys-282, His-287, Cys-292, Cys-321, and Cys-324. The RING-type 3; degenerate zinc finger occupies 159 to 207 (CNICLNDDINADQMFSVDKSGHMCCSECVKRHIEVRLLEGSLITCPHYR). The segment at 159–208 (CNICLNDDINADQMFSVDKSGHMCCSECVKRHIEVRLLEGSLITCPHYRC) adopts an RING-type 1 zinc-finger fold. An IBR-type zinc finger spans residues 233-292 (TKDELIPVMDRVYCPNPRCSTLMSETELSGLNIGVRRCCVKCGEPFCVKCKVSWHNNLSC). Residues 321–349 (CSKCKHMIELSSGCISVVCRCGHTFCYQC) form an RING-type 2; atypical zinc finger. The RING-type 4; degenerate zinc-finger motif lies at 321-356 (CSKCKHMIELSSGCISVVCRCGHTFCYQCGADAGDC). Cys-334 is a catalytic residue. The Zn(2+) site is built by Cys-339, Cys-341, Cys-346, Cys-349, His-358, and Cys-370. Residues 374–394 (CCCFVFFLVIIAIVVTIILLV) traverse the membrane as a helical segment.

The protein belongs to the RBR family. As to quaternary structure, interacts with the PYL4 and PYR1 ABA receptors at the plasma membrane. Zn(2+) serves as cofactor.

The protein localises to the cell membrane. It is found in the vacuole membrane. The enzyme catalyses [E2 ubiquitin-conjugating enzyme]-S-ubiquitinyl-L-cysteine + [acceptor protein]-L-lysine = [E2 ubiquitin-conjugating enzyme]-L-cysteine + [acceptor protein]-N(6)-ubiquitinyl-L-lysine.. It functions in the pathway protein modification; protein ubiquitination. In terms of biological role, acts as an E3 ubiquitin-protein ligase, or as part of E3 complex, which accepts ubiquitin from specific E2 ubiquitin-conjugating enzymes and then transfers it to substrates. Negative regulator of the abscisic acid (ABA) signaling pathway which targets PYL4 and PYR1 ABA receptors in plasma membrane to promote their FREE1/FYVE1-dependent trafficking and degradation upon ubiquitynation; this process involves clathrin-mediated endocytosis and trafficking through the ESCRT pathway. Involved in the maintenance of seed longevity. May enhance gibberellins responses. In Arabidopsis thaliana (Mouse-ear cress), this protein is E3 ubiquitin-protein ligase RSL1.